The sequence spans 348 residues: Phenylalanine--tRNA ligase alpha subunit (348 aa).

Mg(2+) is bound at residue E259.

The protein belongs to the class-II aminoacyl-tRNA synthetase family. Phe-tRNA synthetase alpha subunit type 1 subfamily. As to quaternary structure, tetramer of two alpha and two beta subunits. Mg(2+) is required as a cofactor.

The protein resides in the cytoplasm. The catalysed reaction is tRNA(Phe) + L-phenylalanine + ATP = L-phenylalanyl-tRNA(Phe) + AMP + diphosphate + H(+). This Lacticaseibacillus paracasei (strain ATCC 334 / BCRC 17002 / CCUG 31169 / CIP 107868 / KCTC 3260 / NRRL B-441) (Lactobacillus paracasei) protein is Phenylalanine--tRNA ligase alpha subunit.